The chain runs to 212 residues: MNLLIMGLPGAGKGTQAAKIVEQFHVAHISTGDMFRAAMANQTEMGVLAKSYIDKGELVPDEVTNGIVKERLSQDDIKETGFLLDGYPRTIEQAHALDKTLAELGIELEGVINIEVNPDSLLERLSGRIIHRVTGETFHKVFNPPVDYKEEDYYQREDDKPETVKRRLDVNIAQGEPIIAHYRAKGLVHDIEGNQDINDVFSDIEKVLTNLK.

Residue 10-15 (GAGKGT) coordinates ATP. Residues 30-59 (STGDMFRAAMANQTEMGVLAKSYIDKGELV) are NMP. AMP is bound by residues threonine 31, arginine 36, 57–59 (ELV), 86–89 (GYPR), and glutamine 93. The LID stretch occupies residues 127 to 159 (GRIIHRVTGETFHKVFNPPVDYKEEDYYQREDD). ATP contacts are provided by residues arginine 128 and 137–138 (TF). Residues arginine 156 and arginine 167 each contribute to the AMP site. Residue glutamine 195 participates in ATP binding.

The protein belongs to the adenylate kinase family. In terms of assembly, monomer.

It localises to the cytoplasm. It carries out the reaction AMP + ATP = 2 ADP. Its pathway is purine metabolism; AMP biosynthesis via salvage pathway; AMP from ADP: step 1/1. Its function is as follows. Catalyzes the reversible transfer of the terminal phosphate group between ATP and AMP. Plays an important role in cellular energy homeostasis and in adenine nucleotide metabolism. This chain is Adenylate kinase, found in Streptococcus pneumoniae serotype 4 (strain ATCC BAA-334 / TIGR4).